The primary structure comprises 333 residues: MAKIFYDSDCNLDLLKDKTVAVIGFGSQGHAHALNLRDSGINVVVGLYHGSKSWAKAESHGLKVMTADEATKVADVIMILVNDEKQPKLFKESIEPNLKEGKAIAFAHGFNIHFGQIVPPPYVDVIMIAPKGPGHTVRSQYEEGKGVPALVAVHQDYTGKALDVALAYAKGIGASRAGIILTTFKEETETDLFGEQAVLCGGLTELIKAGFDTLVEAGYQPEIAYFECLHEMKLIVDLIWQGGLSLMRYSISDTAEYGDYMTGKRIITEETRKEMKKVLEEIQNGTFAKKWILENMAGRPEFNSIRKREQNLLIEQVGKELRKMMPWIKPIKE.

Residues 2–182 form the KARI N-terminal Rossmann domain; that stretch reads AKIFYDSDCN…GASRAGIILT (181 aa). NADP(+) is bound by residues 25 to 28, S51, S53, and 83 to 86; these read FGSQ and DEKQ. H108 is an active-site residue. G134 provides a ligand contact to NADP(+). Residues 183 to 328 form the KARI C-terminal knotted domain; it reads TFKEETETDL…KELRKMMPWI (146 aa). D191, E195, E227, and E231 together coordinate Mg(2+). S252 serves as a coordination point for substrate.

It belongs to the ketol-acid reductoisomerase family. Mg(2+) serves as cofactor.

The catalysed reaction is (2R)-2,3-dihydroxy-3-methylbutanoate + NADP(+) = (2S)-2-acetolactate + NADPH + H(+). It catalyses the reaction (2R,3R)-2,3-dihydroxy-3-methylpentanoate + NADP(+) = (S)-2-ethyl-2-hydroxy-3-oxobutanoate + NADPH + H(+). Its pathway is amino-acid biosynthesis; L-isoleucine biosynthesis; L-isoleucine from 2-oxobutanoate: step 2/4. The protein operates within amino-acid biosynthesis; L-valine biosynthesis; L-valine from pyruvate: step 2/4. Functionally, involved in the biosynthesis of branched-chain amino acids (BCAA). Catalyzes an alkyl-migration followed by a ketol-acid reduction of (S)-2-acetolactate (S2AL) to yield (R)-2,3-dihydroxy-isovalerate. In the isomerase reaction, S2AL is rearranged via a Mg-dependent methyl migration to produce 3-hydroxy-3-methyl-2-ketobutyrate (HMKB). In the reductase reaction, this 2-ketoacid undergoes a metal-dependent reduction by NADPH to yield (R)-2,3-dihydroxy-isovalerate. In Caldicellulosiruptor bescii (strain ATCC BAA-1888 / DSM 6725 / KCTC 15123 / Z-1320) (Anaerocellum thermophilum), this protein is Ketol-acid reductoisomerase (NADP(+)).